The following is a 254-amino-acid chain: Small ribosomal subunit protein uS2 (254 aa).

Belongs to the universal ribosomal protein uS2 family.

The chain is Small ribosomal subunit protein uS2 from Borrelia recurrentis (strain A1).